A 293-amino-acid chain; its full sequence is Light-independent protochlorophyllide reductase iron-sulfur ATP-binding protein (293 aa).

ATP-binding positions include 10 to 15 (GIGKST) and Lys-39. Ser-14 lines the Mg(2+) pocket. The [4Fe-4S] cluster site is built by Cys-95 and Cys-129. 180–181 (NR) contributes to the ATP binding site.

It belongs to the NifH/BchL/ChlL family. In terms of assembly, homodimer. Protochlorophyllide reductase is composed of three subunits; ChlL, ChlN and ChlB. Requires [4Fe-4S] cluster as cofactor.

The protein localises to the plastid. It localises to the chloroplast. It carries out the reaction chlorophyllide a + oxidized 2[4Fe-4S]-[ferredoxin] + 2 ADP + 2 phosphate = protochlorophyllide a + reduced 2[4Fe-4S]-[ferredoxin] + 2 ATP + 2 H2O. Its pathway is porphyrin-containing compound metabolism; chlorophyll biosynthesis (light-independent). Functionally, component of the dark-operative protochlorophyllide reductase (DPOR) that uses Mg-ATP and reduced ferredoxin to reduce ring D of protochlorophyllide (Pchlide) to form chlorophyllide a (Chlide). This reaction is light-independent. The L component serves as a unique electron donor to the NB-component of the complex, and binds Mg-ATP. The polypeptide is Light-independent protochlorophyllide reductase iron-sulfur ATP-binding protein (Adiantum capillus-veneris (Maidenhair fern)).